The sequence spans 151 residues: Ubiquitin-conjugating enzyme E2 W (151 aa).

The UBC core domain occupies 3-151 (SMQKRLQKEL…TKWWYHDDTC (149 aa)). Cysteine 91 (glycyl thioester intermediate) is an active-site residue.

It belongs to the ubiquitin-conjugating enzyme family.

It localises to the nucleus. It catalyses the reaction S-ubiquitinyl-[E1 ubiquitin-activating enzyme]-L-cysteine + [E2 ubiquitin-conjugating enzyme]-L-cysteine = [E1 ubiquitin-activating enzyme]-L-cysteine + S-ubiquitinyl-[E2 ubiquitin-conjugating enzyme]-L-cysteine.. The enzyme catalyses S-ubiquitinyl-[E1 ubiquitin-activating enzyme]-L-cysteine + [acceptor protein]-N-terminal-amino acid = [E1 ubiquitin-activating enzyme]-L-cysteine + N-terminal-ubiquitinyl-[acceptor protein].. It participates in protein modification; protein ubiquitination. Functionally, accepts ubiquitin from the E1 complex and catalyzes its covalent attachment to other proteins. Catalyzes monoubiquitination. Involved in degradation of misfolded chaperone substrate and DNA repair. The polypeptide is Ubiquitin-conjugating enzyme E2 W (ube2w) (Xenopus tropicalis (Western clawed frog)).